The primary structure comprises 436 residues: GTPase Der (436 aa).

EngA-type G domains are found at residues 4 to 167 and 176 to 351; these read PVIA…PKIE and IRFS…ESHS. Residues 10 to 17, 57 to 61, 119 to 122, 182 to 189, 229 to 233, and 294 to 297 contribute to the GTP site; these read GRPNVGKS, DTGGI, NKVD, DTAGM, and NKWD. The KH-like domain occupies 352–436; it reads IRVQTNVLND…PIHIIARARD (85 aa).

It belongs to the TRAFAC class TrmE-Era-EngA-EngB-Septin-like GTPase superfamily. EngA (Der) GTPase family. Associates with the 50S ribosomal subunit.

In terms of biological role, GTPase that plays an essential role in the late steps of ribosome biogenesis. In Bacillus mycoides (strain KBAB4) (Bacillus weihenstephanensis), this protein is GTPase Der.